Reading from the N-terminus, the 394-residue chain is Stearoyl-[acyl-carrier-protein] 9-desaturase 1, chloroplastic (394 aa).

A chloroplast-targeting transit peptide spans 1 to 37 (MVMAMDRIALFSSSSSVYHHGSSHSHGSKSSRVFTIR). Positions 135, 173, 176, 226, 259, and 262 each coordinate Fe cation.

Belongs to the fatty acid desaturase type 2 family. As to quaternary structure, homodimer. Fe(2+) is required as a cofactor. In terms of tissue distribution, ubiquitously expressed.

It localises to the plastid. The protein resides in the chloroplast. The enzyme catalyses octadecanoyl-[ACP] + 2 reduced [2Fe-2S]-[ferredoxin] + O2 + 2 H(+) = (9Z)-octadecenoyl-[ACP] + 2 oxidized [2Fe-2S]-[ferredoxin] + 2 H2O. Its pathway is lipid metabolism; fatty acid metabolism. In terms of biological role, converts stearoyl-ACP to oleoyl-ACP by introduction of a cis double bond between carbons 9 and 10 of the acyl chain. In Arabidopsis thaliana (Mouse-ear cress), this protein is Stearoyl-[acyl-carrier-protein] 9-desaturase 1, chloroplastic (S-ACP-DES1).